Consider the following 831-residue polypeptide: von Willebrand factor A domain-containing protein DDB_G0285981 (831 aa).

The region spanning 60–188 is the VIT domain; that stretch reads RDTFGLKTFS…NVTIHLTIIS (129 aa). The 169-residue stretch at 312–480 folds into the VWFA domain; that stretch reads EFIFLIDCSG…NFEEQVMKLV (169 aa).

The protein is von Willebrand factor A domain-containing protein DDB_G0285981 of Dictyostelium discoideum (Social amoeba).